Consider the following 121-residue polypeptide: uncharacterized protein (121 aa).

Belongs to the HHV-5 UL30 protein family.

This is an uncharacterized protein from Human cytomegalovirus (strain AD169) (HHV-5).